The following is a 320-amino-acid chain: 4-hydroxythreonine-4-phosphate dehydrogenase (320 aa).

Residue Thr-132 participates in substrate binding. A divalent metal cation-binding residues include His-161, His-205, and His-258. Positions 266, 275, and 284 each coordinate substrate.

Belongs to the PdxA family. In terms of assembly, homodimer. A divalent metal cation serves as cofactor.

Its subcellular location is the cytoplasm. The catalysed reaction is 4-(phosphooxy)-L-threonine + NAD(+) = 3-amino-2-oxopropyl phosphate + CO2 + NADH. It participates in cofactor biosynthesis; pyridoxine 5'-phosphate biosynthesis; pyridoxine 5'-phosphate from D-erythrose 4-phosphate: step 4/5. Its function is as follows. Catalyzes the NAD(P)-dependent oxidation of 4-(phosphooxy)-L-threonine (HTP) into 2-amino-3-oxo-4-(phosphooxy)butyric acid which spontaneously decarboxylates to form 3-amino-2-oxopropyl phosphate (AHAP). This chain is 4-hydroxythreonine-4-phosphate dehydrogenase, found in Aquifex aeolicus (strain VF5).